Here is a 217-residue protein sequence, read N- to C-terminus: 3,4-dihydroxy-2-butanone 4-phosphate synthase (217 aa).

D-ribulose 5-phosphate-binding positions include 37–38 (RE), Asp42, 150–154 (RGGHT), and Glu174. Glu38 lines the Mg(2+) pocket. A Mg(2+)-binding site is contributed by His153.

This sequence belongs to the DHBP synthase family. In terms of assembly, homodimer. Mg(2+) is required as a cofactor. It depends on Mn(2+) as a cofactor.

It catalyses the reaction D-ribulose 5-phosphate = (2S)-2-hydroxy-3-oxobutyl phosphate + formate + H(+). The protein operates within cofactor biosynthesis; riboflavin biosynthesis; 2-hydroxy-3-oxobutyl phosphate from D-ribulose 5-phosphate: step 1/1. In terms of biological role, catalyzes the conversion of D-ribulose 5-phosphate to formate and 3,4-dihydroxy-2-butanone 4-phosphate. The polypeptide is 3,4-dihydroxy-2-butanone 4-phosphate synthase (Escherichia fergusonii (strain ATCC 35469 / DSM 13698 / CCUG 18766 / IAM 14443 / JCM 21226 / LMG 7866 / NBRC 102419 / NCTC 12128 / CDC 0568-73)).